The chain runs to 447 residues: Exodeoxyribonuclease 7 large subunit (447 aa).

It belongs to the XseA family. As to quaternary structure, heterooligomer composed of large and small subunits.

It localises to the cytoplasm. It carries out the reaction Exonucleolytic cleavage in either 5'- to 3'- or 3'- to 5'-direction to yield nucleoside 5'-phosphates.. Its function is as follows. Bidirectionally degrades single-stranded DNA into large acid-insoluble oligonucleotides, which are then degraded further into small acid-soluble oligonucleotides. This chain is Exodeoxyribonuclease 7 large subunit, found in Exiguobacterium sibiricum (strain DSM 17290 / CCUG 55495 / CIP 109462 / JCM 13490 / 255-15).